A 1164-amino-acid chain; its full sequence is Auxin response factor 7 (1164 aa).

The segment at residues 127–229 (FCKTLTASDT…QLLLGIRRAN (103 aa)) is a DNA-binding region (TF-B3). 5 disordered regions span residues 451–505 (HNNL…QQQL), 536–555 (QQLQSQQHSNNNQSQSQQQQ), 570–728 (HQQP…LLQQ), 765–858 (FLSP…SSSG), and 903–930 (KSKASLTDHQLEASASGTSYGLDGGENN). The segment covering 464-489 (LSFQTPHGGISSSNLQFNKQNQQAPM) has biased composition (polar residues). Residues 570-635 (HQQPLQQQTQ…SQQASTHHLQ (66 aa)) show a composition bias toward low complexity. Residues 637–651 (QLVSGSMASSVITPP) are compositionally biased toward polar residues. Residues 652 to 671 (SSSLNQSFQQQQQQSKQLQQ) are compositionally biased toward low complexity. The span at 678–710 (ASTSQSSVIETSKSSSNLMSAPPQETQFSRQVE) shows a compositional bias: polar residues. 2 stretches are compositionally biased toward low complexity: residues 711–728 (QQQPPGLNGQNQQTLLQQ) and 765–790 (FLSPQSQLPHHQLQSQQLQQLPTLSQ). Positions 791–808 (GHQFPSSCTNNGLSTLQP) are enriched in polar residues. Residues 841-851 (PSSSTSPSTNN) are compositionally biased toward low complexity. A compositionally biased stretch (polar residues) spans 903 to 921 (KSKASLTDHQLEASASGTS). The region spanning 1037 to 1130 (RTYTKVQKRG…EVQQMSLDGN (94 aa)) is the PB1 domain. Positions 1145–1164 (DSGNAWRGHYDDNSATSFNR) are disordered.

It belongs to the ARF family. As to quaternary structure, homodimers and heterodimers. Interacts with the auxin-responsive proteins IAA1 and IAA12 (BODENLOS). Interacts (via PB1 domain) with IAA17 (via PB1 domain). Interacts with IAA19. Interacts with ARF5. Binds to JMJ30. Binds to ATXR2 in the nucleus. In terms of tissue distribution, expressed in the whole plant.

Its subcellular location is the nucleus. Its function is as follows. Auxin response factors (ARFs) are transcriptional factors that bind specifically to the DNA sequence 5'-TGTCTC-3' found in the auxin-responsive promoter elements (AuxREs). Acts as a transcriptional activator of several tropic stimulus-induced (TSI) genes, including SAUR50. Formation of heterodimers with Aux/IAA proteins may alter their ability to modulate early auxin response genes expression. Required for differential growth responses of aerial tissues. Involved in ethylene responses. Regulates lateral root formation through direct regulation of LBD16 and/or LBD29. Functionally redundant with ARF19. Mediates embryo axis formation and vascular tissues differentiation. Functionally redundant with ARF5. Involved in cellular dedifferentiation during callus formation on callus-inducing medium (CIM) and in an ATXR2-dependent manner. In Arabidopsis thaliana (Mouse-ear cress), this protein is Auxin response factor 7.